Here is a 142-residue protein sequence, read N- to C-terminus: Hemoglobin subunit alpha-4 (142 aa).

Residues 2 to 142 form the Globin domain; it reads TLTDSDKAAI…VATVLTSKYR (141 aa). Histidine 59 contributes to the O2 binding site. Residue histidine 88 participates in heme b binding.

Belongs to the globin family. Heterotetramer of two alpha chains and two beta chains. Red blood cells.

This is a larval (tadpole) alpha-globin. The polypeptide is Hemoglobin subunit alpha-4 (hba4) (Xenopus laevis (African clawed frog)).